Reading from the N-terminus, the 977-residue chain is Poly [ADP-ribose] polymerase 1 (977 aa).

PARP-type zinc fingers lie at residues 8–91 (WKAE…GSAP) and 104–179 (CTIE…KKDA). The Zn(2+) site is built by Cys20, Cys23, His52, Cys55, Cys116, Cys119, His141, and Cys144. 2 disordered regions span residues 177 to 199 (KDAP…QNDI) and 218 to 237 (DKGK…DLQE). The region spanning 227-365 (DSNANSSDLQ…AKKPERVLPP (139 aa)) is the PADR1 zinc-binding domain. Positions 254–288 (KKHVSTAELRNMLEANGQDTSGPERHLLDRCADGM) constitute an SAP domain. The segment at 291–335 (GALGTCPVCSSFLYYHGGQYHCSGYVSEWSKCTYSTTEPVRSKKK) is zinc ribbon. Residues Cys296, Cys299, Cys312, and Cys322 each coordinate Zn(2+). Residues 381–473 (SFLSEGLDKL…RVLPFDLYKV (93 aa)) form the BRCT domain. Residues 504–604 (TGHILEDGKS…TNFQKQPGKF (101 aa)) enclose the WGR domain. In terms of domain architecture, PARP alpha-helical spans 626 to 745 (KSSLPPQLLE…DIEIASKLVG (120 aa)). The region spanning 752-977 (ESLDDKYKKL…LLKVRFHHKR (226 aa)) is the PARP catalytic domain.

It belongs to the ARTD/PARP family.

It is found in the nucleus. It carries out the reaction NAD(+) + (ADP-D-ribosyl)n-acceptor = nicotinamide + (ADP-D-ribosyl)n+1-acceptor + H(+).. The enzyme catalyses L-aspartyl-[protein] + NAD(+) = 4-O-(ADP-D-ribosyl)-L-aspartyl-[protein] + nicotinamide. The catalysed reaction is L-glutamyl-[protein] + NAD(+) = 5-O-(ADP-D-ribosyl)-L-glutamyl-[protein] + nicotinamide. Involved in the base excision repair (BER) pathway, by catalyzing the poly(ADP-ribosyl)ation of a limited number of acceptor proteins involved in chromatin architecture and in DNA metabolism. This modification follows DNA damages and appears as an obligatory step in a detection/signaling pathway leading to the reparation of DNA strand breaks. The protein is Poly [ADP-ribose] polymerase 1 (PARP1) of Oryza sativa subsp. japonica (Rice).